A 97-amino-acid polypeptide reads, in one-letter code: Mitochondrial import inner membrane translocase subunit Tim8 A (97 aa).

A Twin CX3C motif motif is present at residues C43 to C66. 2 disulfides stabilise this stretch: C43/C66 and C47/C62. Phosphoserine occurs at positions 57, 87, 94, and 96.

This sequence belongs to the small Tim family. Heterohexamer; composed of 3 copies of TIMM8A and 3 copies of TIMM13, named soluble 70 kDa complex. Associates with the TIM22 complex, whose core is composed of TIMM22.

The protein resides in the mitochondrion inner membrane. Its function is as follows. Mitochondrial intermembrane chaperone that participates in the import and insertion of some multi-pass transmembrane proteins into the mitochondrial inner membrane. Also required for the transfer of beta-barrel precursors from the TOM complex to the sorting and assembly machinery (SAM complex) of the outer membrane. Acts as a chaperone-like protein that protects the hydrophobic precursors from aggregation and guide them through the mitochondrial intermembrane space. The TIMM8-TIMM13 complex mediates the import of proteins such as TIMM23, SLC25A12/ARALAR1 and SLC25A13/ARALAR2, while the predominant TIMM9-TIMM10 70 kDa complex mediates the import of much more proteins. The sequence is that of Mitochondrial import inner membrane translocase subunit Tim8 A (TIMM8A) from Bos taurus (Bovine).